We begin with the raw amino-acid sequence, 246 residues long: tRNA (guanine-N(7)-)-methyltransferase (246 aa).

Positions methionine 1–isoleucine 26 are disordered. S-adenosyl-L-methionine-binding residues include glutamate 75, glutamate 100, aspartate 127, and aspartate 150. Residue aspartate 150 is part of the active site. Lysine 154 lines the substrate pocket. The interaction with RNA stretch occupies residues lysine 156–arginine 161. Substrate contacts are provided by residues aspartate 186 and threonine 225–glutamate 228.

This sequence belongs to the class I-like SAM-binding methyltransferase superfamily. TrmB family.

It carries out the reaction guanosine(46) in tRNA + S-adenosyl-L-methionine = N(7)-methylguanosine(46) in tRNA + S-adenosyl-L-homocysteine. Its pathway is tRNA modification; N(7)-methylguanine-tRNA biosynthesis. In terms of biological role, catalyzes the formation of N(7)-methylguanine at position 46 (m7G46) in tRNA. This Polaromonas sp. (strain JS666 / ATCC BAA-500) protein is tRNA (guanine-N(7)-)-methyltransferase.